We begin with the raw amino-acid sequence, 343 residues long: Ribosomal RNA small subunit methyltransferase C (343 aa).

It belongs to the methyltransferase superfamily. RsmC family. Monomer.

The protein resides in the cytoplasm. It catalyses the reaction guanosine(1207) in 16S rRNA + S-adenosyl-L-methionine = N(2)-methylguanosine(1207) in 16S rRNA + S-adenosyl-L-homocysteine + H(+). In terms of biological role, specifically methylates the guanine in position 1207 of 16S rRNA in the 30S particle. This is Ribosomal RNA small subunit methyltransferase C from Escherichia coli O81 (strain ED1a).